The chain runs to 193 residues: Putative protein-glutamate methylesterase/protein-glutamine glutaminase (193 aa).

Residues 1-179 (MNYEAIVIGV…DYVLSLEKIA (179 aa)) enclose the CheB-type methylesterase domain. Active-site residues include S11, H38, and D131.

Belongs to the CheB family.

The protein localises to the cytoplasm. It carries out the reaction [protein]-L-glutamate 5-O-methyl ester + H2O = L-glutamyl-[protein] + methanol + H(+). The catalysed reaction is L-glutaminyl-[protein] + H2O = L-glutamyl-[protein] + NH4(+). In terms of biological role, may be involved in chemotaxis. The polypeptide is Putative protein-glutamate methylesterase/protein-glutamine glutaminase (cheB2) (Leptospira interrogans serogroup Icterohaemorrhagiae serovar copenhageni (strain Fiocruz L1-130)).